The sequence spans 550 residues: Transcriptional repressor RHIT (550 aa).

Disordered stretches follow at residues Met-1 to Ala-67, Val-174 to Val-200, and Lys-216 to Ala-296. Composition is skewed to basic and acidic residues over residues Ala-11 to Gly-22, Glu-45 to Pro-58, and Leu-187 to Val-200. A KRAB domain is found at Val-124–Glu-193. Lys-216 is covalently cross-linked (Glycyl lysine isopeptide (Lys-Gly) (interchain with G-Cter in SUMO2)). Residues Asp-267 to Arg-281 are compositionally biased toward basic and acidic residues. Ser-290 is subject to Phosphoserine. 8 consecutive C2H2-type zinc fingers follow at residues Tyr-306–His-328, Tyr-334–His-356, Tyr-362–His-384, Tyr-390–His-412, His-418–His-440, Tyr-446–His-468, Tyr-474–His-496, and Tyr-502–His-524.

Belongs to the krueppel C2H2-type zinc-finger protein family.

It localises to the nucleus. Its function is as follows. Transcriptional repressor involved in regulating MPV17L expression. By regulating MPV17L expression, contributes to the regulation of genes involved in H(2)O(2) metabolism and the mitochondrial apoptotic cascade. In Bos taurus (Bovine), this protein is Transcriptional repressor RHIT (ZNF205).